The sequence spans 342 residues: Succinylglutamate desuccinylase (342 aa).

Residues H63, E66, and H155 each contribute to the Zn(2+) site. The active site involves E219.

This sequence belongs to the AspA/AstE family. Succinylglutamate desuccinylase subfamily. Requires Zn(2+) as cofactor.

The catalysed reaction is N-succinyl-L-glutamate + H2O = L-glutamate + succinate. The protein operates within amino-acid degradation; L-arginine degradation via AST pathway; L-glutamate and succinate from L-arginine: step 5/5. Functionally, transforms N(2)-succinylglutamate into succinate and glutamate. This Vibrio campbellii (strain ATCC BAA-1116) protein is Succinylglutamate desuccinylase.